Reading from the N-terminus, the 463-residue chain is Kynurenine 3-monooxygenase (463 aa).

Belongs to the aromatic-ring hydroxylase family. KMO subfamily. FAD serves as cofactor.

It localises to the mitochondrion outer membrane. It catalyses the reaction L-kynurenine + NADPH + O2 + H(+) = 3-hydroxy-L-kynurenine + NADP(+) + H2O. It participates in cofactor biosynthesis; NAD(+) biosynthesis; quinolinate from L-kynurenine: step 1/3. In terms of biological role, catalyzes the hydroxylation of L-kynurenine (L-Kyn) to form 3-hydroxy-L-kynurenine (L-3OHKyn). Required for synthesis of quinolinic acid. In Yarrowia lipolytica (strain CLIB 122 / E 150) (Yeast), this protein is Kynurenine 3-monooxygenase.